The primary structure comprises 78 residues: MSDTEERVKKIIVEHLGVDADKVVQNASFIDDLGADSLDTVELVMAFEEEFGIEIPDDAAETIFTVNDAVKFIDKASS.

In terms of domain architecture, Carrier spans 2–77; that stretch reads SDTEERVKKI…DAVKFIDKAS (76 aa). S37 bears the O-(pantetheine 4'-phosphoryl)serine mark.

It belongs to the acyl carrier protein (ACP) family. 4'-phosphopantetheine is transferred from CoA to a specific serine of apo-ACP by AcpS. This modification is essential for activity because fatty acids are bound in thioester linkage to the sulfhydryl of the prosthetic group.

It localises to the cytoplasm. The protein operates within lipid metabolism; fatty acid biosynthesis. Carrier of the growing fatty acid chain in fatty acid biosynthesis. The chain is Acyl carrier protein from Bartonella bacilliformis (strain ATCC 35685 / KC583 / Herrer 020/F12,63).